The following is a 219-amino-acid chain: UPF0126 membrane protein SCO5481 (219 aa).

6 helical membrane passes run 10 to 30 (VQHT…ALLA), 34 to 54 (NFDV…GGLF), 66 to 86 (AFTD…VFFL), 93 to 113 (LQTG…VAGT), 120 to 140 (GLGL…GGVL), and 158 to 178 (LYAV…RYEA).

The protein belongs to the UPF0126 family.

Its subcellular location is the cell membrane. This is UPF0126 membrane protein SCO5481 from Streptomyces coelicolor (strain ATCC BAA-471 / A3(2) / M145).